The chain runs to 229 residues: Flagellar L-ring protein (229 aa).

The first 23 residues, 1 to 23, serve as a signal peptide directing secretion; it reads MNPLTRVALAVAAFAALVLALSA. C24 is lipidated: N-palmitoyl cysteine. Residue C24 is the site of S-diacylglycerol cysteine attachment.

This sequence belongs to the FlgH family. As to quaternary structure, the basal body constitutes a major portion of the flagellar organelle and consists of four rings (L,P,S, and M) mounted on a central rod.

It is found in the cell outer membrane. The protein localises to the bacterial flagellum basal body. Its function is as follows. Assembles around the rod to form the L-ring and probably protects the motor/basal body from shearing forces during rotation. This is Flagellar L-ring protein from Anaeromyxobacter sp. (strain K).